The following is a 185-amino-acid chain: uncharacterized protein (185 aa).

This is an uncharacterized protein from Magallana gigas (Pacific oyster).